The following is a 362-amino-acid chain: GDSL esterase/lipase At5g18430 (362 aa).

A signal peptide spans 1–19; sequence MTISTVIAFMSMFLVFVMS. Ser-35 functions as the Nucleophile in the catalytic mechanism. Asn-117 carries an N-linked (GlcNAc...) asparagine glycan. Residues Asp-327 and His-330 contribute to the active site. N-linked (GlcNAc...) asparagine glycosylation is present at Asn-355.

It belongs to the 'GDSL' lipolytic enzyme family.

The protein resides in the secreted. This chain is GDSL esterase/lipase At5g18430, found in Arabidopsis thaliana (Mouse-ear cress).